A 337-amino-acid polypeptide reads, in one-letter code: uncharacterized protein (337 aa).

The protein belongs to the mimivirus R69 family.

This is an uncharacterized protein from Acanthamoeba polyphaga mimivirus (APMV).